Here is a 5142-residue protein sequence, read N- to C-terminus: Protein piccolo (5142 aa).

A compositionally biased stretch (low complexity) spans 1 to 21; the sequence is MGNEASLEGEGLPEGLAAAAA. Disordered stretches follow at residues 1 to 154 and 177 to 583; these read MGNE…SMMP and DLIS…PSQG. 3 stretches are compositionally biased toward basic and acidic residues: residues 114–125, 136–150, and 188–202; these read RTTDTFRSEQKL, KESK…EHKS, and ETTK…EQGK. Positions 232–244 are enriched in polar residues; it reads QDGTPKSISSQQP. 2 stretches are compositionally biased toward pro residues: residues 298–317 and 352–371; these read LPSP…PPAQ and PVQP…PAKP. A compositionally biased stretch (polar residues) spans 376–385; the sequence is TGSEKPSSEQ. Residues 397–555 form a 10 X 10 AA tandem approximate repeats of P-A-K-P-Q-P-Q-Q-P-X region; the sequence is VGKTPAQQPG…PAKPSAQQST (159 aa). Residues 467–493 show a composition bias toward pro residues; that stretch reads TKPPSQLPGPAKPPPQQPGPAKPPPQQ. Residues 494–506 are compositionally biased toward low complexity; sequence PGSAKPPSQQPGS. Positions 507-522 are enriched in pro residues; sequence TKPPPQQPGPAKPSPQ. A compositionally biased stretch (low complexity) spans 523-554; the sequence is QPGSTKPPSQQPGSAKPSAQQPSPAKPSAQQS. The C4-type zinc-finger motif lies at 589–613; it reads CPLCNTTELLLHVPEKANFNTCTEC. Disordered regions lie at residues 650–929 and 945–1058; these read LAPV…TVTG and LIST…PEST. The segment covering 673–683 has biased composition (low complexity); that stretch reads SKSSPQPQQTS. Composition is skewed to basic and acidic residues over residues 684–702 and 743–755; these read PKKD…EPKK and EQDK…DKPK. Residues 765 to 774 show a composition bias toward polar residues; that stretch reads DLVSSSSATT. Residues 841–857 are compositionally biased toward basic and acidic residues; it reads KGQKQVDPVQKKEEPKK. The span at 873-882 shows a compositional bias: pro residues; it reads KGSPTPPGPR. The span at 889–927 shows a compositional bias: polar residues; sequence VPTPQQSPKPQEQSRRFSLNLGSITDAPKSQPTTPQETV. A phosphoserine mark is found at Ser-906 and Ser-918. At Thr-922 the chain carries Phosphothreonine. Residues 949–969 are compositionally biased toward low complexity; sequence AGQPGPHSQSGPGAPMKQAPA. 2 stretches are compositionally biased toward basic and acidic residues: residues 996-1012 and 1019-1034; these read VKKE…EPKA and KRTE…KDSK. The C4-type zinc finger occupies 1059–1082; the sequence is CPLCKTELNIGSKDPPNFNTCTEC. Disordered regions lie at residues 1120–1163, 1183–1386, 1391–1410, and 1423–1868; these read GDIR…QEQE, EKIP…TDEK, GLKK…SDLA, and QAST…SDPE. The span at 1126-1139 shows a compositional bias: pro residues; it reads PPAPSGPKASPMPV. Composition is skewed to basic and acidic residues over residues 1193-1265, 1307-1318, and 1330-1347; these read QKQE…HDLL, PKEDDKTTKTIK, and DQVE…DKSD. The span at 1348–1358 shows a compositional bias: low complexity; the sequence is TSSSQQPKSPQ. A phosphoserine mark is found at Ser-1356, Ser-1366, Ser-1367, Ser-1396, Ser-1398, Ser-1401, Ser-1402, and Ser-1405. The segment covering 1359 to 1374 has biased composition (polar residues); that stretch reads GLSDTGYSSDGISSSL. The segment covering 1398–1407 has biased composition (low complexity); sequence SQESSPSSPS. Composition is skewed to basic and acidic residues over residues 1428-1451 and 1469-1510; these read ADEK…DQEK and KESQ…REPY. Residues Ser-1516, Ser-1517, Ser-1519, Ser-1522, Ser-1546, Ser-1549, Ser-1570, and Ser-1572 each carry the phosphoserine modification. The span at 1564-1576 shows a compositional bias: acidic residues; sequence SADEDASGSEDDE. At Thr-1617 the chain carries Phosphothreonine. Ser-1618, Ser-1628, and Ser-1640 each carry phosphoserine. Over residues 1631-1640 the composition is skewed to acidic residues; it reads DEDDEAFDES. Basic and acidic residues predominate over residues 1641 to 1652; the sequence is PELKYRETKSQE. Polar residues predominate over residues 1671–1689; the sequence is ELNSTIADKYSAESSQKKT. The segment covering 1693-1703 has biased composition (acidic residues); that stretch reads FDEEPELEMES. At Ser-1703 the chain carries Phosphoserine. Thr-1705 is modified (phosphothreonine). Residues Ser-1707 and Ser-1712 each carry the phosphoserine modification. The segment covering 1715 to 1732 has biased composition (polar residues); it reads EGSSSLHASSFTPGTSPT. Over residues 1772–1785 the composition is skewed to acidic residues; it reads DSSEEEELREEEEL. Ser-1773 and Ser-1774 each carry phosphoserine. Positions 1786–1799 are enriched in basic and acidic residues; that stretch reads LKEQEKQREIEQQQ. Position 1825 is a phosphothreonine (Thr-1825). The residue at position 1831 (Ser-1831) is a Phosphoserine. Over residues 1840-1855 the composition is skewed to basic and acidic residues; the sequence is EELRQAAEMEELHRSS. A phosphoserine mark is found at Ser-1860, Ser-1865, Ser-1873, and Ser-1894. Disordered stretches follow at residues 2169–2192, 2365–2438, and 2504–2536; these read PSES…SSVC, ETFG…PTIL, and EPSK…PTGL. 2 stretches are compositionally biased toward low complexity: residues 2174–2192 and 2374–2387; these read TSVP…SSVC and SQLP…SSLP. Pro residues-rich tracts occupy residues 2404-2433 and 2506-2517; these read QPPP…PTSP and SKPPIAPKPVIP. Residue Ser-2562 is modified to Phosphoserine. Thr-3069 is subject to Phosphothreonine. Disordered regions lie at residues 3407–3508 and 3558–3626; these read EKQP…DKTK and KTYK…LYSP. Residues 3432–3441 show a composition bias toward basic and acidic residues; it reads DDPRSFKKIV. Phosphoserine is present on Ser-3443. Phosphothreonine occurs at positions 3447 and 3474. Over residues 3474-3483 the composition is skewed to acidic residues; that stretch reads TDDEDQDEWD. Residues 3574 to 3585 are compositionally biased toward polar residues; the sequence is DTQSPQYLSATS. Residues Ser-3577, Ser-3585, Ser-3615, Ser-3619, Ser-3625, Ser-3628, Ser-3631, Ser-3652, Ser-3678, Ser-3680, and Ser-3686 each carry the phosphoserine modification. Disordered regions lie at residues 3652–3746 and 3833–3908; these read SPQK…MGTV and YMSD…QQSH. Polar residues-rich tracts occupy residues 3701–3716 and 3733–3745; these read EGYT…SSGA and STGT…TMGT. Position 3835 is a phosphoserine (Ser-3835). Residues 3845 to 3857 are compositionally biased toward basic and acidic residues; it reads TRIESQHGIERPR. Polar residues predominate over residues 3859–3908; sequence APQTEFSQFIPPQTQTESQLVPPTSPYTQYQYSSPALPTQAPTSYTQQSH. Phosphoserine occurs at positions 4088 and 4204. Residues 4278 to 4301 form a disordered region; the sequence is EADKPYSSGSRSRPSSRPSSVYGL. Positions 4282–4301 are enriched in low complexity; that stretch reads PYSSGSRSRPSSRPSSVYGL. Phosphoserine occurs at positions 4358, 4362, 4365, 4394, and 4430. Residues 4389 to 4411 are disordered; it reads RDQFGSSHSLPEVQQHMREESRT. Residues 4496-4590 form the PDZ domain; it reads RIKITRDSKD…EAEICVRLDL (95 aa). Disordered regions lie at residues 4597-4618 and 4645-4690; these read ENSQ…KSPG and EKGS…TKVV. Over residues 4598–4615 the composition is skewed to basic and acidic residues; the sequence is NSQHLELHEPPKAVDKAK. The span at 4652–4673 shows a compositional bias: low complexity; it reads SGPTSAGSSSVPSPGQPGSPSV. Residue Ser-4664 is modified to Phosphoserine. One can recognise a C2 1 domain in the interval 4694 to 4823; the sequence is ITGEIQLQIN…SHLDNTPRWY (130 aa). Positions 4723 and 4729 each coordinate Ca(2+). The residue at position 4778 (Ser-4778) is a Phosphoserine. The Ca(2+) site is built by Asp-4793, Asp-4795, Ser-4798, and Asp-4801. 2 disordered regions span residues 4830 to 4907 and 4930 to 4986; these read ESID…VTQT and PTKP…QNGQ. Composition is skewed to low complexity over residues 4838–4853 and 4877–4887; these read HSSQ…SVIK and SSPGSSKSSSE. The segment covering 4895-4907 has biased composition (polar residues); sequence PSRSQSKTSVTQT. Positions 4941–4965 are enriched in low complexity; sequence SSVSTGSSGSSFGSGYSVDSEGSSS. A C2 2 domain is found at 5007–5132; that stretch reads VMGEIKIALK…DLRKRIVNWH (126 aa).

As to quaternary structure, interacts with BSN, ERC2/CAST1, RIMS1 and UNC13A. Interacts (via C-terminus) with TRIO (via N-terminus). Interacts with CTBP1. Interacts with SIAH1; this interaction negatively regulates SIAH1 E3 ligase activity. Directly interacts with GIT1 and GIT2. Requires Ca(2+) as cofactor. Moderately expressed in the developing cerebral cortex.

It localises to the presynaptic active zone. Its function is as follows. Scaffold protein of the presynaptic cytomatrix at the active zone (CAZ) which is the place in the synapse where neurotransmitter is released. After synthesis, participates in the formation of Golgi-derived membranous organelles termed Piccolo-Bassoon transport vesicles (PTVs) that are transported along axons to sites of nascent synaptic contacts. At the presynaptic active zone, regulates the spatial organization of synaptic vesicle cluster, the protein complexes that execute membrane fusion and compensatory endocytosis. Organizes as well the readily releasable pool of synaptic vesicles and safeguards a fraction of them to be not immediately available for action potential-induced release. Also functions in processes other than assembly such as the regulation of specific presynaptic protein ubiquitination by interacting with SIAH1 or the regulation of presynaptic autophagy. Also mediates synapse to nucleus communication leading to reconfiguration of gene expression by associating with the transcriptional corepressor CTBP1 and by subsequently reducing the size of its pool available for nuclear import. In Homo sapiens (Human), this protein is Protein piccolo.